A 175-amino-acid polypeptide reads, in one-letter code: Ribosome maturation factor RimM (175 aa).

One can recognise a PRC barrel domain in the interval 95 to 175; that stretch reads SEDEFYWREL…RIEVDWDPGF (81 aa).

The protein belongs to the RimM family. In terms of assembly, binds ribosomal protein uS19.

It localises to the cytoplasm. Its function is as follows. An accessory protein needed during the final step in the assembly of 30S ribosomal subunit, possibly for assembly of the head region. Essential for efficient processing of 16S rRNA. May be needed both before and after RbfA during the maturation of 16S rRNA. It has affinity for free ribosomal 30S subunits but not for 70S ribosomes. The sequence is that of Ribosome maturation factor RimM from Aliivibrio fischeri (strain MJ11) (Vibrio fischeri).